A 608-amino-acid polypeptide reads, in one-letter code: Cilia- and flagella-associated protein 100 (608 aa).

The segment covering 1–17 has biased composition (polar residues); that stretch reads MSETLSNIVSKNMTNDK. The segment at 1-57 is disordered; that stretch reads MSETLSNIVSKNMTNDKNSLESMNISSSSSAEENPKKQAKKXKERGPDPSANPFHLS. Positions 20–32 are enriched in low complexity; that stretch reads LESMNISSSSSAE. Coiled coils occupy residues 164 to 196 and 230 to 257; these read TLDC…LAKD and LEIR…QHYK. Disordered stretches follow at residues 291-320 and 339-377; these read ASKD…AKEG and LSSP…GEEP. The span at 339–361 shows a compositional bias: low complexity; it reads LSSPQQGSQPSESSGGNSRGSNS. 2 coiled-coil regions span residues 385-435 and 500-575; these read QQLL…QLKQ and TVQM…RGRT.

It belongs to the CFAP100 family.

It localises to the cytoplasm. It is found in the cytoskeleton. The protein localises to the cilium axoneme. In terms of biological role, may play a role in ciliary/flagellar motility by regulating the assembly and the activity of axonemal inner dynein arm. This is Cilia- and flagella-associated protein 100 from Macaca fascicularis (Crab-eating macaque).